The chain runs to 1378 residues: High molecular weight rhoptry protein 2 (1378 aa).

The first 19 residues, 1 to 19, serve as a signal peptide directing secretion; sequence MIKVTIFLLLSIFSFNLYG. Disulfide bonds link Cys46/Cys71 and Cys233/Cys240. Residues 739-759 traverse the membrane as a helical segment; the sequence is FVYASYILGLVFFIESHIDIA. 3 cysteine pairs are disulfide-bonded: Cys791-Cys851, Cys871-Cys912, and Cys947-Cys1034.

Component of the RhopH complex. RhopH complex is composed of CLAG3.1/CLAG3.2, RhopH2 and RhopH3 with a 1:1:1 subunit stoichiometry. Interacts with CLAG3.1/CLAG3.2.

It localises to the host cell membrane. Its subcellular location is the parasitophorous vacuole membrane. It is found in the host cytoplasm. The protein localises to the cytoplasm. The protein resides in the cytoplasmic vesicle. It localises to the secretory vesicle. Its subcellular location is the rhoptry. Its function is as follows. Participates in the formation of new permeability pathways in Plasmodium-infected erythrocytes enabling the uptake of nutrients from the blood plasma. Required for maintaining invasion capacity of merozoites. Required for parasite growth and proliferation. This is High molecular weight rhoptry protein 2 from Plasmodium falciparum (isolate 3D7).